Here is a 338-residue protein sequence, read N- to C-terminus: MKILVAMSGGVDSTVTAYKLKNLGHEVIGCYMKLHGKPNYHEENIKKVEKVANFLQIPYHILDLQEDFKNKVYMPFVDTYKEGKTPNPCALCNRFIKLGKLLEFAKSLGCEKLATGHYARLENNLIKTAVDESKDQSYFLASADKEALKYLIFPLGEMKKEDVKKFASTIEVLKSFATQKESSEICFVEDTYVQVLDQFMDTKIPGEVLDSSGKVVGKHEGYMHYTIGKRRGFEVRGAHEPHFVLKINPKQNQIIVGTKEELKISEFNLKNINLFIDAKELDCEVKIRYRSKSTPCKVEIYEDKSAKIILKDPVYGLASGQMAVFYDHDKVIASGFIE.

ATP contacts are provided by residues 6-13 (AMSGGVDS) and M32. Catalysis depends on C92, which acts as the Nucleophile. Cysteines 92 and 186 form a disulfide. G116 lines the ATP pocket. Residues 134–136 (KDQ) form an interaction with tRNA region. The Cysteine persulfide intermediate role is filled by C186. The interaction with tRNA stretch occupies residues 288-289 (RY).

It belongs to the MnmA/TRMU family.

It localises to the cytoplasm. It carries out the reaction S-sulfanyl-L-cysteinyl-[protein] + uridine(34) in tRNA + AH2 + ATP = 2-thiouridine(34) in tRNA + L-cysteinyl-[protein] + A + AMP + diphosphate + H(+). Functionally, catalyzes the 2-thiolation of uridine at the wobble position (U34) of tRNA, leading to the formation of s(2)U34. In Campylobacter jejuni subsp. jejuni serotype O:2 (strain ATCC 700819 / NCTC 11168), this protein is tRNA-specific 2-thiouridylase MnmA.